The chain runs to 405 residues: Nicotinate phosphoribosyltransferase (405 aa).

Position 230 is a phosphohistidine; by autocatalysis (histidine 230).

This sequence belongs to the NAPRTase family. Post-translationally, transiently phosphorylated on a His residue during the reaction cycle. Phosphorylation strongly increases the affinity for substrates and increases the rate of nicotinate D-ribonucleotide production. Dephosphorylation regenerates the low-affinity form of the enzyme, leading to product release.

The catalysed reaction is nicotinate + 5-phospho-alpha-D-ribose 1-diphosphate + ATP + H2O = nicotinate beta-D-ribonucleotide + ADP + phosphate + diphosphate. It participates in cofactor biosynthesis; NAD(+) biosynthesis; nicotinate D-ribonucleotide from nicotinate: step 1/1. Its function is as follows. Catalyzes the synthesis of beta-nicotinate D-ribonucleotide from nicotinate and 5-phospho-D-ribose 1-phosphate at the expense of ATP. This Bordetella pertussis (strain Tohama I / ATCC BAA-589 / NCTC 13251) protein is Nicotinate phosphoribosyltransferase.